Reading from the N-terminus, the 318-residue chain is Aspartate carbamoyltransferase catalytic subunit (318 aa).

Carbamoyl phosphate is bound by residues arginine 58 and threonine 59. Lysine 86 lines the L-aspartate pocket. Residues arginine 108, histidine 141, and glutamine 144 each coordinate carbamoyl phosphate. L-aspartate-binding residues include arginine 174 and arginine 226. Residues glycine 270 and proline 271 each coordinate carbamoyl phosphate.

This sequence belongs to the aspartate/ornithine carbamoyltransferase superfamily. ATCase family. In terms of assembly, heterododecamer (2C3:3R2) of six catalytic PyrB chains organized as two trimers (C3), and six regulatory PyrI chains organized as three dimers (R2).

The catalysed reaction is carbamoyl phosphate + L-aspartate = N-carbamoyl-L-aspartate + phosphate + H(+). Its pathway is pyrimidine metabolism; UMP biosynthesis via de novo pathway; (S)-dihydroorotate from bicarbonate: step 2/3. Its function is as follows. Catalyzes the condensation of carbamoyl phosphate and aspartate to form carbamoyl aspartate and inorganic phosphate, the committed step in the de novo pyrimidine nucleotide biosynthesis pathway. The polypeptide is Aspartate carbamoyltransferase catalytic subunit (Lactobacillus helveticus (strain DPC 4571)).